The sequence spans 242 residues: Tryptophan synthase alpha chain (242 aa).

Active-site proton acceptor residues include E31 and D42.

It belongs to the TrpA family. As to quaternary structure, tetramer of two alpha and two beta chains.

It catalyses the reaction (1S,2R)-1-C-(indol-3-yl)glycerol 3-phosphate + L-serine = D-glyceraldehyde 3-phosphate + L-tryptophan + H2O. It functions in the pathway amino-acid biosynthesis; L-tryptophan biosynthesis; L-tryptophan from chorismate: step 5/5. In terms of biological role, the alpha subunit is responsible for the aldol cleavage of indoleglycerol phosphate to indole and glyceraldehyde 3-phosphate. The protein is Tryptophan synthase alpha chain of Staphylococcus aureus (strain bovine RF122 / ET3-1).